Here is a 1097-residue protein sequence, read N- to C-terminus: Cyclin-T (1097 aa).

Disordered stretches follow at residues 319-782, 804-936, and 985-1097; these read SNIT…SNGI, LLKP…SLQA, and AAPV…YNKK. The span at 332-350 shows a compositional bias: basic and acidic residues; it reads DSRDRDRDRERERERERDP. 4 stretches are compositionally biased toward low complexity: residues 373–390, 420–456, 467–478, and 489–511; these read SSSVSGVPGSSSSSSSSS, PSSHQRSSSSGLGSSGSGSQRSSSSSSSSSQQPGRPS, GMPPVGVGMPPH, and PQQPQQQPVPHPSASNSSASGMS. The segment covering 580 to 591 has biased composition (polar residues); sequence LPYSQSQSYGHM. Low complexity predominate over residues 592 to 606; sequence QQQPVPQSQQQQMPP. Over residues 609–620 the composition is skewed to polar residues; it reads SQHSLQSKNSLF. The span at 652 to 675 shows a compositional bias: basic and acidic residues; sequence HDYKLNSHPRDKESPKKERLTPTK. Residues 687-698 are compositionally biased toward low complexity; sequence GSGNSSSGSGSS. The span at 860–870 shows a compositional bias: basic and acidic residues; it reads GEIKEESSSKS. A compositionally biased stretch (basic residues) spans 871 to 883; that stretch reads EKKKKKDKHKHKE. Basic and acidic residues predominate over residues 884–895; the sequence is KDKSKDKTEKEE. At Ser916 the chain carries Phosphoserine. Gly residues predominate over residues 993–1007; sequence GAGGGGYSSSGGSSS. Residues 1016–1031 show a composition bias toward basic and acidic residues; the sequence is SDRDRDKESKKNKSQD. Residues 1037–1050 are compositionally biased toward gly residues; the sequence is GAGGGIFNPLGGAG. Pro residues predominate over residues 1087-1097; the sequence is APPPMPVYNKK.

The protein belongs to the cyclin family. Cyclin C subfamily. Component of the super elongation complex (SEC), at least composed of Ell, Cdk9, cyclin-T (CycT), lilli and ear. Associates with CDK9 to form P-TEFb.

It is found in the nucleus. Its function is as follows. Regulatory subunit of the cyclin-dependent kinase pair (CDK9/cyclin T) complex, also called positive transcription elongation factor B (P-TEFb), which is proposed to facilitate the transition from abortive to production elongation by phosphorylating the CTD (carboxy-terminal domain) of the large subunit of RNA polymerase II (RNAP II). The protein is Cyclin-T (CycT) of Drosophila melanogaster (Fruit fly).